Consider the following 475-residue polypeptide: MEIOTIC F-BOX protein MOF (475 aa).

Residues 1–58 (MRRERDATQIPENPMEGIPQTAAAAAAAAAAEASEPPRKRARVDGGGGGAGEEEEDRL) form a disordered region. Over residues 22-33 (AAAAAAAAAAEA) the composition is skewed to low complexity. One can recognise an F-box domain in the interval 55-91 (EDRLSDLPDCLLEDILAHLGSRQAVQTSVLSRRWRNL).

The protein belongs to the F-box protein family. FBX subfamily. As to quaternary structure, part of a SCF (SKP1-CUL1-F-box protein) E3 ubiquitin-protein ligase complex. Interacts (via F-box domain) directly with SKP1. As to expression, highly expressed in the stem, leaf and in the anther during meiosis. Weakly expressed in roots and lemma/palea.

The protein resides in the nucleus. It localises to the chromosome. It participates in protein modification; protein ubiquitination. Functionally, probable component of a SCF (SKP1-CULLIN-F-box protein) E3 ubiquitin-protein ligase complex and may function through the ubiquitin-mediated protein degradation or signaling pathway. Required for male meiotic prophase I progression. Required for telomere bouquet formation, homologous chromosome pairing and for the formation of the synaptonemal complex (SC), which stabilizes initial chromosomal axial associations and promotes crossover formation. Involved in meiotic DNA double-strand break (DSB) end-processing and repair, and is important in the recruitment of DSB repair proteins to the DSB sites. This chain is MEIOTIC F-BOX protein MOF, found in Oryza sativa subsp. japonica (Rice).